The sequence spans 236 residues: 2,3,4,5-tetrahydropyridine-2,6-dicarboxylate N-acetyltransferase (236 aa).

It belongs to the transferase hexapeptide repeat family. DapH subfamily.

The enzyme catalyses (S)-2,3,4,5-tetrahydrodipicolinate + acetyl-CoA + H2O = L-2-acetamido-6-oxoheptanedioate + CoA. Its pathway is amino-acid biosynthesis; L-lysine biosynthesis via DAP pathway; LL-2,6-diaminopimelate from (S)-tetrahydrodipicolinate (acetylase route): step 1/3. In terms of biological role, catalyzes the transfer of an acetyl group from acetyl-CoA to tetrahydrodipicolinate. The protein is 2,3,4,5-tetrahydropyridine-2,6-dicarboxylate N-acetyltransferase of Listeria monocytogenes serotype 4b (strain CLIP80459).